Reading from the N-terminus, the 269-residue chain is Glutamate 5-kinase 2 (269 aa).

K16 is a binding site for ATP. Positions 57, 144, and 156 each coordinate substrate. 218–224 is a binding site for ATP; it reads SGGMISK.

The protein belongs to the glutamate 5-kinase family.

Its subcellular location is the cytoplasm. The enzyme catalyses L-glutamate + ATP = L-glutamyl 5-phosphate + ADP. It participates in amino-acid biosynthesis; L-proline biosynthesis; L-glutamate 5-semialdehyde from L-glutamate: step 1/2. Functionally, catalyzes the transfer of a phosphate group to glutamate to form L-glutamate 5-phosphate. The protein is Glutamate 5-kinase 2 of Rhizobium meliloti (strain 1021) (Ensifer meliloti).